The sequence spans 350 residues: tRNA uridine(34) hydroxylase (350 aa).

Positions 146 to 240 (DDPDALFIDM…YARKAREQGL (95 aa)) constitute a Rhodanese domain. C200 functions as the Cysteine persulfide intermediate in the catalytic mechanism.

This sequence belongs to the TrhO family.

The enzyme catalyses uridine(34) in tRNA + AH2 + O2 = 5-hydroxyuridine(34) in tRNA + A + H2O. In terms of biological role, catalyzes oxygen-dependent 5-hydroxyuridine (ho5U) modification at position 34 in tRNAs, the first step in 5-carboxymethoxyuridine (cmo5U) biosynthesis. May be part of an alternate pathway, which is able to bypass cmo5U biogenesis in a subset of tRNAs under aerobic conditions. This chain is tRNA uridine(34) hydroxylase, found in Escherichia coli O127:H6 (strain E2348/69 / EPEC).